Reading from the N-terminus, the 371-residue chain is Homoserine O-acetyltransferase (371 aa).

One can recognise an AB hydrolase-1 domain in the interval 44–350 (NAILVEHAWT…SYGHDAFLLE (307 aa)). Catalysis depends on S150, which acts as the Nucleophile. R217 contacts substrate. Residues D311 and H344 contribute to the active site. D345 is a substrate binding site.

The protein belongs to the AB hydrolase superfamily. MetX family. In terms of assembly, homodimer.

The protein localises to the cytoplasm. It catalyses the reaction L-homoserine + acetyl-CoA = O-acetyl-L-homoserine + CoA. It participates in amino-acid biosynthesis; L-methionine biosynthesis via de novo pathway; O-acetyl-L-homoserine from L-homoserine: step 1/1. Its function is as follows. Transfers an acetyl group from acetyl-CoA to L-homoserine, forming acetyl-L-homoserine. The polypeptide is Homoserine O-acetyltransferase (Pelobacter propionicus (strain DSM 2379 / NBRC 103807 / OttBd1)).